The primary structure comprises 335 residues: S-adenosylmethionine:tRNA ribosyltransferase-isomerase (335 aa).

Belongs to the QueA family. Monomer.

The protein resides in the cytoplasm. It catalyses the reaction 7-aminomethyl-7-carbaguanosine(34) in tRNA + S-adenosyl-L-methionine = epoxyqueuosine(34) in tRNA + adenine + L-methionine + 2 H(+). Its pathway is tRNA modification; tRNA-queuosine biosynthesis. In terms of biological role, transfers and isomerizes the ribose moiety from AdoMet to the 7-aminomethyl group of 7-deazaguanine (preQ1-tRNA) to give epoxyqueuosine (oQ-tRNA). The chain is S-adenosylmethionine:tRNA ribosyltransferase-isomerase from Thermosipho africanus (strain TCF52B).